We begin with the raw amino-acid sequence, 283 residues long: Bifunctional protein FolD (283 aa).

NADP(+) contacts are provided by residues 165–167 (GRS) and serine 190.

It belongs to the tetrahydrofolate dehydrogenase/cyclohydrolase family. As to quaternary structure, homodimer.

It carries out the reaction (6R)-5,10-methylene-5,6,7,8-tetrahydrofolate + NADP(+) = (6R)-5,10-methenyltetrahydrofolate + NADPH. The enzyme catalyses (6R)-5,10-methenyltetrahydrofolate + H2O = (6R)-10-formyltetrahydrofolate + H(+). It functions in the pathway one-carbon metabolism; tetrahydrofolate interconversion. In terms of biological role, catalyzes the oxidation of 5,10-methylenetetrahydrofolate to 5,10-methenyltetrahydrofolate and then the hydrolysis of 5,10-methenyltetrahydrofolate to 10-formyltetrahydrofolate. The chain is Bifunctional protein FolD from Paracidovorax citrulli (strain AAC00-1) (Acidovorax citrulli).